The following is a 120-amino-acid chain: UPF0145 protein UNCMA_30400 (120 aa).

This sequence belongs to the UPF0145 family.

This Methanocella arvoryzae (strain DSM 22066 / NBRC 105507 / MRE50) protein is UPF0145 protein UNCMA_30400.